Reading from the N-terminus, the 254-residue chain is Diphthine synthase (254 aa).

Residues leucine 11, aspartate 86, isoleucine 89, 114–115 (SV), leucine 166, leucine 207, and histidine 232 each bind S-adenosyl-L-methionine.

Belongs to the diphthine synthase family. In terms of assembly, homodimer.

It catalyses the reaction 2-[(3S)-amino-3-carboxypropyl]-L-histidyl-[translation elongation factor 2] + 3 S-adenosyl-L-methionine = diphthine-[translation elongation factor 2] + 3 S-adenosyl-L-homocysteine + 3 H(+). Its pathway is protein modification; peptidyl-diphthamide biosynthesis. In terms of biological role, S-adenosyl-L-methionine-dependent methyltransferase that catalyzes the trimethylation of the amino group of the modified target histidine residue in translation elongation factor 2 (EF-2), to form an intermediate called diphthine. The three successive methylation reactions represent the second step of diphthamide biosynthesis. In Sulfurisphaera tokodaii (strain DSM 16993 / JCM 10545 / NBRC 100140 / 7) (Sulfolobus tokodaii), this protein is Diphthine synthase.